A 542-amino-acid chain; its full sequence is MEKRTLLAVILSITVFYVFSLLFAPEKKPVQPESTGQAVSAPVSAGQPVAGGVQPSASAPSLPATAQQQDVTVRTGLYTAVFCSRGGALKSLTLKNYREKNLPDAQAVVLGSDADPSALTFSTRASGFNLPEGAPFVADATAVTMAGGEKKQLVFTHNSGQGFTVRKIYTFSGDSYGIKLDTQVFNNMAVPLVGTVQQVMTYPGLVKAKDSRFETAGSYLFSDNSLESDKLKDVSSASKLYDKNLQWSGFADKYFLTAILSEGGSIASVELRKNGAGFLESTVSSPRITVTPGQSVTVVHRLFVGPKDIDILKAQGNSLEQSLDLGWFTVIAKPLLYTLKYFYRYVGNYGVAIIIITIILKALFFPLTHKSYKSMKDMQKIQPMMAALKEKYKDDREGMNKAVMELYRDHKVNPLGGCLPMLVQIPVFFALYKALMFSIELRHAPFYFWITDLSGPDNLFGQMLGLPFVIGPLPLLMGATMFIQQKMTPSTMDPMQAKMMLALPVVFTFMFLNFPSGLVLYWLLNNILTIGQQMYINKLVND.

Residues 5 to 25 (TLLAVILSITVFYVFSLLFAP) form a helical membrane-spanning segment. A disordered region spans residues 33-64 (ESTGQAVSAPVSAGQPVAGGVQPSASAPSLPA). The span at 54 to 64 (QPSASAPSLPA) shows a compositional bias: low complexity. 5 helical membrane-spanning segments follow: residues 323 to 343 (LDLGWFTVIAKPLLYTLKYFY), 345 to 365 (YVGNYGVAIIIITIILKALFF), 419 to 439 (LPMLVQIPVFFALYKALMFSI), 463 to 483 (MLGLPFVIGPLPLLMGATMFI), and 500 to 520 (MLALPVVFTFMFLNFPSGLVL).

It belongs to the OXA1/ALB3/YidC family. Type 1 subfamily. As to quaternary structure, interacts with the Sec translocase complex via SecD. Specifically interacts with transmembrane segments of nascent integral membrane proteins during membrane integration.

It is found in the cell inner membrane. In terms of biological role, required for the insertion and/or proper folding and/or complex formation of integral membrane proteins into the membrane. Involved in integration of membrane proteins that insert both dependently and independently of the Sec translocase complex, as well as at least some lipoproteins. Aids folding of multispanning membrane proteins. The polypeptide is Membrane protein insertase YidC (Pelobacter propionicus (strain DSM 2379 / NBRC 103807 / OttBd1)).